Consider the following 114-residue polypeptide: Dihydroneopterin monophosphate aldolase (114 aa).

The Zn(2+) site is built by histidine 15, histidine 26, and histidine 28.

This sequence belongs to the PTPS family. The cofactor is Zn(2+).

The enzyme catalyses 7,8-dihydroneopterin 3'-phosphate = glycolaldehyde phosphate + 6-hydroxymethyl-7,8-dihydropterin. Functionally, catalyzes the conversion of 7,8-dihydroneopterin monophosphate (H2NMP) to 6-hydroxymethyl-7,8-dihydropterin (6-HMD). Cannot use 7,8-dihydroneopterin (H2Neo) or 7,8-dihydroneopterin triphosphate (H2NTP) as substrate. This is Dihydroneopterin monophosphate aldolase from Pyrococcus furiosus (strain ATCC 43587 / DSM 3638 / JCM 8422 / Vc1).